The following is a 173-amino-acid chain: MDYFTLFGLPVRYPVDGSLLASRYQDLQRQFHPDRFASQPERERLMALQQAATINEAYQTLKHPLKRAEYMLSLHGFDLGNEQHTMRDTAFLMEQLELREELDAIERKADAQTQLASFGARVNETVKQRSALMIQQLDSQQWMDAADTVRKLRFLDKLQQQVEQLEEKLLGFE.

One can recognise a J domain in the interval 2–74; the sequence is DYFTLFGLPV…LKRAEYMLSL (73 aa).

This sequence belongs to the HscB family. Interacts with HscA and stimulates its ATPase activity. Interacts with IscU.

Functionally, co-chaperone involved in the maturation of iron-sulfur cluster-containing proteins. Seems to help targeting proteins to be folded toward HscA. This Serratia proteamaculans (strain 568) protein is Co-chaperone protein HscB.